A 180-amino-acid polypeptide reads, in one-letter code: Shikimate kinase (180 aa).

Residue 14 to 19 coordinates ATP; sequence GAGKSS. Ser18 provides a ligand contact to Mg(2+). Residues Asp36, Arg60, and Gly82 each contribute to the substrate site. Arg120 lines the ATP pocket. Substrate is bound at residue Arg139.

It belongs to the shikimate kinase family. As to quaternary structure, monomer. Mg(2+) is required as a cofactor.

The protein resides in the cytoplasm. It catalyses the reaction shikimate + ATP = 3-phosphoshikimate + ADP + H(+). Its pathway is metabolic intermediate biosynthesis; chorismate biosynthesis; chorismate from D-erythrose 4-phosphate and phosphoenolpyruvate: step 5/7. Its function is as follows. Catalyzes the specific phosphorylation of the 3-hydroxyl group of shikimic acid using ATP as a cosubstrate. The polypeptide is Shikimate kinase (Xylella fastidiosa (strain M23)).